The chain runs to 362 residues: tRNA-specific 2-thiouridylase MnmA (362 aa).

ATP contacts are provided by residues 13-20 (GLSGGVDS) and M39. The interaction with target base in tRNA stretch occupies residues 99-101 (NPD). C104 functions as the Nucleophile in the catalytic mechanism. C104 and C200 are oxidised to a cystine. G128 lines the ATP pocket. The segment at 150–152 (KDQ) is interaction with tRNA. C200 acts as the Cysteine persulfide intermediate in catalysis.

The protein belongs to the MnmA/TRMU family.

Its subcellular location is the cytoplasm. It carries out the reaction S-sulfanyl-L-cysteinyl-[protein] + uridine(34) in tRNA + AH2 + ATP = 2-thiouridine(34) in tRNA + L-cysteinyl-[protein] + A + AMP + diphosphate + H(+). Catalyzes the 2-thiolation of uridine at the wobble position (U34) of tRNA, leading to the formation of s(2)U34. The protein is tRNA-specific 2-thiouridylase MnmA of Coxiella burnetii (strain RSA 493 / Nine Mile phase I).